The primary structure comprises 164 residues: Transcription antitermination protein NusB (164 aa).

The protein belongs to the NusB family.

In terms of biological role, involved in transcription antitermination. Required for transcription of ribosomal RNA (rRNA) genes. Binds specifically to the boxA antiterminator sequence of the ribosomal RNA (rrn) operons. This Desulfovibrio desulfuricans (strain ATCC 27774 / DSM 6949 / MB) protein is Transcription antitermination protein NusB.